The sequence spans 366 residues: tRNA/tmRNA (uracil-C(5))-methyltransferase (366 aa).

Gln-190, Tyr-218, Asn-223, Glu-239, and Asp-299 together coordinate S-adenosyl-L-methionine. Catalysis depends on Cys-324, which acts as the Nucleophile. The active-site Proton acceptor is Glu-358.

This sequence belongs to the class I-like SAM-binding methyltransferase superfamily. RNA M5U methyltransferase family. TrmA subfamily.

The enzyme catalyses uridine(54) in tRNA + S-adenosyl-L-methionine = 5-methyluridine(54) in tRNA + S-adenosyl-L-homocysteine + H(+). It carries out the reaction uridine(341) in tmRNA + S-adenosyl-L-methionine = 5-methyluridine(341) in tmRNA + S-adenosyl-L-homocysteine + H(+). Its function is as follows. Dual-specificity methyltransferase that catalyzes the formation of 5-methyluridine at position 54 (m5U54) in all tRNAs, and that of position 341 (m5U341) in tmRNA (transfer-mRNA). The protein is tRNA/tmRNA (uracil-C(5))-methyltransferase of Escherichia coli O17:K52:H18 (strain UMN026 / ExPEC).